Consider the following 688-residue polypeptide: Elongation factor G (688 aa).

Residues 8-282 (EKTRNIGIMA…AIIDYLPSPM (275 aa)) enclose the tr-type G domain. GTP contacts are provided by residues 17–24 (AHIDAGKT), 81–85 (DTPGH), and 135–138 (NKMD).

The protein belongs to the TRAFAC class translation factor GTPase superfamily. Classic translation factor GTPase family. EF-G/EF-2 subfamily.

The protein localises to the cytoplasm. Its function is as follows. Catalyzes the GTP-dependent ribosomal translocation step during translation elongation. During this step, the ribosome changes from the pre-translocational (PRE) to the post-translocational (POST) state as the newly formed A-site-bound peptidyl-tRNA and P-site-bound deacylated tRNA move to the P and E sites, respectively. Catalyzes the coordinated movement of the two tRNA molecules, the mRNA and conformational changes in the ribosome. In Phytoplasma mali (strain AT), this protein is Elongation factor G.